The primary structure comprises 386 residues: Bifunctional enzyme IspD/IspF (386 aa).

The 2-C-methyl-D-erythritol 4-phosphate cytidylyltransferase stretch occupies residues 1–230 (MIRDERVAAI…RARSILEAPV (230 aa)). Positions 231–386 (AMGVGYDTHR…HAVALLVRVR (156 aa)) are 2-C-methyl-D-erythritol 2,4-cyclodiphosphate synthase. Asp-237 and His-239 together coordinate a divalent metal cation. 4-CDP-2-C-methyl-D-erythritol 2-phosphate-binding positions include 237-239 (DTH) and 262-263 (HS). His-270 serves as a coordination point for a divalent metal cation. Residues 284–286 (DLG), 289–293 (FPDTD), 360–363 (TTGE), Phe-367, and Arg-370 contribute to the 4-CDP-2-C-methyl-D-erythritol 2-phosphate site.

In the N-terminal section; belongs to the IspD/TarI cytidylyltransferase family. IspD subfamily. This sequence in the C-terminal section; belongs to the IspF family. A divalent metal cation is required as a cofactor.

The enzyme catalyses 2-C-methyl-D-erythritol 4-phosphate + CTP + H(+) = 4-CDP-2-C-methyl-D-erythritol + diphosphate. The catalysed reaction is 4-CDP-2-C-methyl-D-erythritol 2-phosphate = 2-C-methyl-D-erythritol 2,4-cyclic diphosphate + CMP. It participates in isoprenoid biosynthesis; isopentenyl diphosphate biosynthesis via DXP pathway; isopentenyl diphosphate from 1-deoxy-D-xylulose 5-phosphate: step 2/6. The protein operates within isoprenoid biosynthesis; isopentenyl diphosphate biosynthesis via DXP pathway; isopentenyl diphosphate from 1-deoxy-D-xylulose 5-phosphate: step 4/6. Functionally, bifunctional enzyme that catalyzes the formation of 4-diphosphocytidyl-2-C-methyl-D-erythritol from CTP and 2-C-methyl-D-erythritol 4-phosphate (MEP) (IspD), and catalyzes the conversion of 4-diphosphocytidyl-2-C-methyl-D-erythritol 2-phosphate (CDP-ME2P) to 2-C-methyl-D-erythritol 2,4-cyclodiphosphate (ME-CPP) with a corresponding release of cytidine 5-monophosphate (CMP) (IspF). This is Bifunctional enzyme IspD/IspF from Anaeromyxobacter sp. (strain Fw109-5).